The primary structure comprises 487 residues: GTPase Der (487 aa).

2 EngA-type G domains span residues 3–166 (PVIA…PRDA) and 193–366 (IKIA…QSAV). Residues 9-16 (GRPNVGKS), 56-60 (DTGGI), 118-121 (NKID), 199-206 (GRPNVGKS), 246-250 (DTAGV), and 311-314 (NKWD) each bind GTP. The KH-like domain maps to 367-451 (TRWPTSRLTQ…PIRIEYKGGE (85 aa)). Residues 448 to 461 (KGGENPYEGKKNTL) show a composition bias toward basic and acidic residues. The segment at 448-487 (KGGENPYEGKKNTLTDRQVNKKRRLMSHHKKAEKKRRDKR) is disordered. The span at 467–487 (NKKRRLMSHHKKAEKKRRDKR) shows a compositional bias: basic residues.

It belongs to the TRAFAC class TrmE-Era-EngA-EngB-Septin-like GTPase superfamily. EngA (Der) GTPase family. Associates with the 50S ribosomal subunit.

Its function is as follows. GTPase that plays an essential role in the late steps of ribosome biogenesis. This Pseudomonas putida (strain ATCC 700007 / DSM 6899 / JCM 31910 / BCRC 17059 / LMG 24140 / F1) protein is GTPase Der.